Reading from the N-terminus, the 1506-residue chain is MTTVVVHVDSKAELTTLLEQWEKDHGSGQDMVPILTRMSELIEKETEEYRKGDPDPFDDRHPGRADPECMLGHLLRILFKNDDFMNALVNAYVMTSREPPLNTAACRLLLDIMPGLETAVVFQEKEGIVENLFKWAREADQPLRTYSTGLLGGAMENQDIAANYRDENSQLVAIVLRRLRELQLQEVALRQDSKRPSPRKLSSEPLLPLDEEAVDMDYGDMAVDVVDGEQESSRDMEISFRLDSSHKTSSRVNSATKPEEGGLKKNKSAKHGDRENFRKAKQKLGFSSSDPDRVFVELSNSSWSEMSPWVIGTNYTLYPMTPAIEQRLILQYLTPLGEYQELLPIFMQLGSRELMMFYIDLKQTNDVLLTFEALKHLASLLLHNKFATEFVAHGGVQKLLEIPRPSMAATGVSMCLYYLSYNQDAMERVCMHPHNVLSDVVNYTLWLMECSHASGCCHATMFFSICFSFRAVLELFDRYDGLRRLVNLISTLEILNLEDQGALLSDDEIFASRQTGKHTCMALRKYFEAHLAIKLEQVKQSLQRTEGGILVHPQPPYKACSYTHEQIVEMMEFLIEYGPAQLYWEPAEVFLKLSCVQLLLQLISIACNWKTYYARNDTVRFALDVLAILTVVPKIQLQLAESVDVLDEAGSAVSTVGISIILGVAEGEFFIHDAEIQKSALQIIINCVCGPDNRISSIGKFISGTPRRKLSQTPKSSEHTLAKMWNVVQSNNGIKVLLSLLSIKMPITDADQIRALACKALVGLSRSSTVRQIISKLPLFSSCQIQQLMKEPVLQDKRSDHVKFCKYAAELIERVSGKPLLIGTDVSLARLQKADVVAQSRISFPEKELLLLIRNHLISKGLGETATVLTREADLPMTAASHSSAFTPVTAAASPVSLPRTPRIANGIASRLGSHATVGASAPSAPPAHPPPRPPQGSLPLPGPSYAGNSPLIGRISFIRERPSPCNGRKIRVLRQKSDHGAYSQSPAIKKQLDRHLPSPPTLDSIITEYLREQHARCKNPVATCPPFSLFTPHQCPEPKQRRQAPINFTSRLNRRASFPKYGGVDGGCFDRHLIFSRFRPISVFREANEDESGFTCCAFSARERFLMLGTCTGQLKLYNVFSGQEEASYNCHNSAITHLEPSRDGSLLLTSATWSQPLSALWGMKSVFDMKHSFTEDHYVEFSKHSQDRVIGTKGDIAHIYDIQTGNKLLTLFNPDLANNYKRNCATFNPTDDLVLNDGVLWDVRSAQAIHKFDKFNMNISGVFHPNGLEVIINTEIWDLRTFHLLHTVPALDQCRVVFNHTGTVMYGAMLQADDEDDLLEERMKSPFGSSFRTFNATDYKPIATIDVKRNIFDLCTDTKDCYLAVIENQGSMDALNMDTVCRLYEVGRQRLAEDEDEEEDQEEEEQEEEDDDEDDDDTDDLDELDTDQLLEAELEEDDNNENAGEDGDNDFSPSDEELANLLEEGEEGEDEDSDADEEVELILGDTDSSDNSDLEDDIILSLNE.

Positions 141–499 (QPLRTYSTGL…STLEILNLED (359 aa)) are protein kinase-like. A phosphoserine mark is found at Ser-202 and Ser-254. A disordered region spans residues 241–275 (RLDSSHKTSSRVNSATKPEEGGLKKNKSAKHGDRE). The Chromo domain occupies 561 to 592 (SYTHEQIVEMMEFLIEYGPAQLYWEPAEVFLK). N6-acetyllysine is present on Lys-700. Ser-827 bears the Phosphoserine mark. A LisH domain is found at 845–877 (PEKELLLLIRNHLISKGLGETATVLTREADLPM). Thr-887 is subject to Phosphothreonine. 2 positions are modified to phosphoserine: Ser-894 and Ser-897. Disordered regions lie at residues 916-946 (ATVGASAPSAPPAHPPPRPPQGSLPLPGPSY) and 977-999 (KSDHGAYSQSPAIKKQLDRHLPS). A compositionally biased stretch (pro residues) spans 924-943 (SAPPAHPPPRPPQGSLPLPG). Phosphoserine is present on residues Ser-978 and Ser-999. WD repeat units lie at residues 1090–1129 (EDESGFTCCAFSARERFLMLGTCTGQLKLYNVFSGQEEAS), 1132–1173 (CHNS…DMKH), 1175–1212 (FTEDHYVEFSKHSQDRVIGTKGDIAHIYDIQTGNKLLT), 1214–1246 (FNPDLANNYKRNCATFNPTDDLVLNDGVLWDVR), and 1247–1289 (SAQA…LLHT). Positions 1090–1289 (EDESGFTCCA…DLRTFHLLHT (200 aa)) are WD repeat-like region. 2 consecutive short sequence motifs (DWD box) follow at residues 1241–1248 (VLWDVRSA) and 1277–1284 (EIWDLRTF). Position 1327 is a phosphoserine (Ser-1327). Positions 1392–1506 (RLAEDEDEEE…EDDIILSLNE (115 aa)) are disordered. Acidic residues-rich tracts occupy residues 1395-1482 (EDED…EEVE) and 1489-1500 (DSSDNSDLEDDI). Positions 1417 to 1506 (DDDTDDLDEL…EDDIILSLNE (90 aa)) are interaction with NF2.

It belongs to the VPRBP/DCAF1 family. As to quaternary structure, component of the DCX (DDB1-CUL4-X-box) E3 ubiquitin-protein ligase complex, named CUL4A-RBX1-DDB1-DCAF1/VPRBP complex. Interacts with DDB1; the interaction is direct. Also forms a ternary complex with DDA1 and DDB1. Interacts with NF2 (via FERM domain). Component of the EDVP complex, a E3 ligase complex containing DYRK2, EDD/UBR5, DDB1 and DCAF1. Interacts with DYRK2; the interaction is direct. Interacts with RAG1; the interaction is direct. Interacts with LLGL1 and LLGL2. Interacts with histone H3. Interacts with ESR1 and LATS1; probably recruited by LATS1 to promote ESR1 ubiquitination and ubiquitin-mediated proteasomal degradation. Directly interacts with TET1, TET2 and TET3 (via C-terminus). Interacts with CEP78; promoting DCAF1 localization to centrosomes. In terms of tissue distribution, widely expressed. Expressed in oocytes and zygotes (at protein level).

Its subcellular location is the cytoplasm. The protein resides in the nucleus. It is found in the cytoskeleton. It localises to the microtubule organizing center. The protein localises to the centrosome. The catalysed reaction is L-seryl-[protein] + ATP = O-phospho-L-seryl-[protein] + ADP + H(+). The enzyme catalyses L-threonyl-[protein] + ATP = O-phospho-L-threonyl-[protein] + ADP + H(+). It functions in the pathway protein modification; protein ubiquitination. Functionally, acts both as a substrate recognition component of E3 ubiquitin-protein ligase complexes and as an atypical serine/threonine-protein kinase, playing key roles in various processes such as cell cycle, telomerase regulation and histone modification. Probable substrate-specific adapter of a DCX (DDB1-CUL4-X-box) E3 ubiquitin-protein ligase complex, named CUL4A-RBX1-DDB1-DCAF1/VPRBP complex, which mediates ubiquitination and proteasome-dependent degradation of proteins such as NF2. Involved in the turnover of methylated proteins: recognizes and binds methylated proteins via its chromo domain, leading to ubiquitination of target proteins by the RBX1-DDB1-DCAF1/VPRBP complex. The CUL4A-RBX1-DDB1-DCAF1/VPRBP complex is also involved in B-cell development: DCAF1 is recruited by RAG1 to ubiquitinate proteins, leading to limit error-prone repair during V(D)J recombination. Also part of the EDVP complex, an E3 ligase complex that mediates ubiquitination of proteins such as TERT, leading to TERT degradation and telomerase inhibition. The EDVP complex also mediates ubiquitination and degradation of CCP110. Also acts as an atypical serine/threonine-protein kinase that specifically mediates phosphorylation of 'Thr-120' of histone H2A (H2AT120ph) in a nucleosomal context, thereby repressing transcription. H2AT120ph is present in the regulatory region of many tumor suppresor genes, down-regulates their transcription and is present at high level in a number of tumors. Involved in JNK-mediated apoptosis during cell competition process via its interaction with LLGL1 and LLGL2. By acting on TET dioxygenses, essential for oocyte maintenance at the primordial follicle stage, hence essential for female fertility. The sequence is that of DDB1- and CUL4-associated factor 1 from Mus musculus (Mouse).